Here is a 681-residue protein sequence, read N- to C-terminus: Chaperone protein htpG (681 aa).

Positions 1-326 (MQKGNIGVTT…SPDIPLNVSR (326 aa)) are a; substrate-binding. The segment at 327-545 (SYLQSDSNVK…YMRRMKEMAN (219 aa)) is b. Positions 546–681 (IQAGMSFYGE…NFVKRSIELI (136 aa)) are c.

It belongs to the heat shock protein 90 family. Homodimer.

Its subcellular location is the cytoplasm. In terms of biological role, molecular chaperone. Has ATPase activity. The sequence is that of Chaperone protein htpG from Bacteroides fragilis (strain YCH46).